The following is a 1287-amino-acid chain: SCL-interrupting locus protein (1287 aa).

Met1 bears the N-acetylmethionine mark. The tract at residues 1-1018 (MEPIYPFARP…IDSPTKVKKN (1018 aa)) is interaction with RBM14. Positions 231–781 (YKYGYLTMDE…VSVEAQSSPG (551 aa)) are interaction with CPAP. Disordered stretches follow at residues 378 to 417 (RSSQKLSSGKMPIHDHDSGVEDEDFSPRPIPSPHPVSQKI) and 508 to 533 (PPAYKKGNPHTRNSIKPSSHNGPSHD). A Phosphoserine modification is found at Ser395. Over residues 517 to 529 (HTRNSIKPSSHNG) the composition is skewed to polar residues. Residues 584–779 (PMELQIPTPP…ELVSVEAQSS (196 aa)) form a PIN1-binding region. 3 positions are modified to phosphoserine: Ser753, Ser779, and Ser1135.

Homodimer. Interacts with PIN1 via its WW domain. This interaction is dependent on STIL mitotic phosphorylation. Interacts with CPAP. Interacts with RBM14 and this interaction interferes with the interaction of STIL with CPAP. Forms a complex with CPAP and SASS6. Interacts (via N-terminus) with CEP85; this interaction is essential for efficient centriolar targeting of STIL and subsequent PLK4 activation. In terms of processing, ubiquitinated. Phosphorylated following the activation of the mitotic checkpoint. Expressed in all hematopoietic tissues and cell lines. Highly expressed in a variety of tumors characterized by increased mitotic activity with highest expression in lung cancer.

The protein localises to the cytoplasm. The protein resides in the cytosol. It is found in the cytoskeleton. Its subcellular location is the microtubule organizing center. It localises to the centrosome. The protein localises to the centriole. The protein resides in the cell cortex. Its function is as follows. Immediate-early gene. Plays an important role in embryonic development as well as in cellular growth and proliferation; its long-term silencing affects cell survival and cell cycle distribution as well as decreases CDK1 activity correlated with reduced phosphorylation of CDK1. Plays a role as a positive regulator of the sonic hedgehog pathway, acting downstream of PTCH1. Plays an important role in the regulation of centriole duplication. Required for the onset of procentriole formation and proper mitotic progression. During procentriole formation, is essential for the correct loading of SASS6 and CPAP to the base of the procentriole to initiate procentriole assembly. In complex with STIL acts as a modulator of PLK4-driven cytoskeletal rearrangements and directional cell motility. The protein is SCL-interrupting locus protein (STIL) of Homo sapiens (Human).